A 1715-amino-acid polypeptide reads, in one-letter code: Protein PHYLLO, chloroplastic (1715 aa).

A chloroplast-targeting transit peptide spans 1–19 (MRSSFLVSNPPFLPSLIPR). Residues 20–273 (YSSRKSIRRS…EKSIFQVSSH (254 aa)) are inactive isochorismate synthase. Positions 363-933 (NAVWASAIIE…GTKSELEDAL (571 aa)) are 2-succinyl-5-enolpyruvyl-6-hydroxy-3-cyclohexene-1-carboxylate synthase. A helical membrane pass occupies residues 429–449 (AVIITSSGTAVSNLLPAVVEA). The segment at 981–1364 (FLHPMIKNVL…SEDVMMNTLG (384 aa)) is O-succinylbenzoate synthase. The active-site Proton donor; for the o-succinylbenzoate synthase activity is the lysine 1170. Residues aspartate 1202, glutamate 1228, and aspartate 1251 each coordinate Mg(2+). The Proton acceptor; for the o-succinylbenzoate synthase activity role is filled by lysine 1279. The 2-succinyl-6-hydroxy-2,4-cyclohexadiene-1-carboxylate synthase stretch occupies residues 1418–1715 (HFIRVHDVGE…QKLLLALKEM (298 aa)). Residues 1435-1540 (LFLHGFLGTG…EGAVVVSGSP (106 aa)) form the AB hydrolase-1 domain.

It in the N-terminal section; belongs to the isochorismate synthase family. In the 2nd section; belongs to the TPP enzyme family. MenD subfamily. The protein in the 3rd section; belongs to the mandelate racemase/muconate lactonizing enzyme family. MenC type 1 subfamily. This sequence in the C-terminal section; belongs to the AB hydrolase superfamily. MenH family. Mg(2+) serves as cofactor. It depends on Mn(2+) as a cofactor. Thiamine diphosphate is required as a cofactor.

The protein localises to the plastid. Its subcellular location is the chloroplast membrane. The enzyme catalyses isochorismate + 2-oxoglutarate + H(+) = 5-enolpyruvoyl-6-hydroxy-2-succinyl-cyclohex-3-ene-1-carboxylate + CO2. It carries out the reaction (1R,6R)-6-hydroxy-2-succinyl-cyclohexa-2,4-diene-1-carboxylate = 2-succinylbenzoate + H2O. It catalyses the reaction 5-enolpyruvoyl-6-hydroxy-2-succinyl-cyclohex-3-ene-1-carboxylate = (1R,6R)-6-hydroxy-2-succinyl-cyclohexa-2,4-diene-1-carboxylate + pyruvate. Its function is as follows. Multifunctional enzyme required for phylloquinone (vitamin K1) biosynthesis. In Arabidopsis thaliana (Mouse-ear cress), this protein is Protein PHYLLO, chloroplastic (PHYLLO).